Consider the following 619-residue polypeptide: Pescadillo homolog (619 aa).

The interval 303-324 (ADKDQKDQDTIEDAEEVTEPTV) is disordered. Acidic residues predominate over residues 312-324 (TIEDAEEVTEPTV). One can recognise a BRCT domain in the interval 353–452 (PTSQLFSKFI…ELVSVGDYAP (100 aa)). The disordered stretch occupies residues 456–567 (LPPHLSPWGD…STKAALTPEE (112 aa)). Coiled-coil stretches lie at residues 472 to 560 (NAKA…ASTK) and 588 to 619 (MQYGIEKKTNRVDELTKKRKQLEKKKKQLKDV). Over residues 480–522 (EAEEEEEEEEEDEEEEEEEEEIEVADGDEDQDDEEEEEIEDED) the composition is skewed to acidic residues. Over residues 523–539 (LKAQKELEMEVAGKKFS) the composition is skewed to basic and acidic residues.

This sequence belongs to the pescadillo family. As to quaternary structure, component of the NOP7 complex, composed of ERB1, NOP7 and YTM1. The complex is held together by ERB1, which interacts with NOP7 via its N-terminal domain and with YTM1 via a high-affinity interaction between the seven-bladed beta-propeller domains of the 2 proteins. The NOP7 complex associates with the 66S pre-ribosome.

The protein localises to the nucleus. Its subcellular location is the nucleolus. It is found in the nucleoplasm. Its function is as follows. Component of the NOP7 complex, which is required for maturation of the 25S and 5.8S ribosomal RNAs and formation of the 60S ribosome. The protein is Pescadillo homolog of Lodderomyces elongisporus (strain ATCC 11503 / CBS 2605 / JCM 1781 / NBRC 1676 / NRRL YB-4239) (Yeast).